A 1060-amino-acid polypeptide reads, in one-letter code: CCR4-NOT transcriptional complex subunit CAF120 (1060 aa).

Residues 1–29 form a disordered region; sequence MRIFSGDNKVVDSPASNPGLMSPSNFGGD. The PH domain maps to 75-204; sequence RRYHEGVFLI…WNSAIRLCLY (130 aa). The span at 465 to 481 shows a compositional bias: low complexity; that stretch reads KLSYGSKSSSNNSSKNS. Disordered stretches follow at residues 465–588, 718–742, and 801–1060; these read KLSY…ETSC, SINS…NNND, and EHRS…PYAQ. Polar residues predominate over residues 490 to 504; sequence LSSSSEQDLNNSDSP. Residues serine 491, serine 510, serine 518, serine 538, and serine 556 each carry the phosphoserine modification. Over residues 571–588 the composition is skewed to basic and acidic residues; sequence NDRKATTPEKFERGETSC. Residues 718-731 show a composition bias toward low complexity; sequence SINSNSDSDRINGS. Basic and acidic residues predominate over residues 801–814; sequence EHRSRHEVPKRSPE. A compositionally biased stretch (polar residues) spans 845–883; that stretch reads SITPQRGQPVPSGQQISSYVQPANINSPNKMYGANNSAM. Phosphoserine is present on residues serine 871 and serine 885. 3 stretches are compositionally biased toward polar residues: residues 900–923, 931–945, and 1048–1060; these read QGWN…TQPQ, PYST…AQYH, and FMPS…PYAQ.

Belongs to the CAF120 family. As to quaternary structure, subunit of the 1.0 MDa CCR4-NOT core complex that contains CCR4, CAF1, CAF120, NOT1, NOT2, NOT3, NOT4, NOT5, CAF40 and CAF130. In the complex interacts with NOT1. The core complex probably is part of a less characterized 1.9 MDa CCR4-NOT complex.

It is found in the cytoplasm. The protein localises to the nucleus. Its subcellular location is the bud neck. Its function is as follows. Acts as a component of the CCR4-NOT core complex, which in the nucleus seems to be a general transcription factor, and in the cytoplasm the major mRNA deadenylase involved in mRNA turnover. The NOT protein subcomplex negatively regulates the basal and activated transcription of many genes. Preferentially affects TC-type TATA element-dependent transcription. Could directly or indirectly inhibit component(s) of the general transcription machinery. In Saccharomyces cerevisiae (strain YJM789) (Baker's yeast), this protein is CCR4-NOT transcriptional complex subunit CAF120 (CAF120).